The sequence spans 1060 residues: Bumetanide-sensitive sodium-(potassium)-chloride cotransporter (1060 aa).

Over Met1–Lys122 the chain is Cytoplasmic. Transmembrane regions (helical) follow at residues Leu123–Phe143 and Gly154–Leu174. The Cytoplasmic segment spans residues Ser175–Ser197. 2 helical membrane-spanning segments follow: residues Leu198 to Ala218 and Ile250 to Glu270. Over Ser271–Asn275 the chain is Cytoplasmic. 2 helical membrane passes run Phe276–Pro296 and Phe332–Ile352. At Ser353–Thr367 the chain is on the cytoplasmic side. Residues Leu368–Gly388 traverse the membrane as a helical segment. 3 N-linked (GlcNAc...) asparagine glycosylation sites follow: Asn396, Asn404, and Asn419. Residues Val432–Leu452 traverse the membrane as a helical segment. Topologically, residues Ser453–Leu497 are cytoplasmic. 2 helical membrane-spanning segments follow: residues Thr498–Ile518 and Cys563–Phe583. At Thr584–Pro642 the chain is on the cytoplasmic side. A helical membrane pass occupies residues Ala643–Ile663. Asn816 carries an N-linked (GlcNAc...) asparagine glycan. A helical transmembrane segment spans residues Thr882–Ile902. Residues Ser903–Ser1060 lie on the Cytoplasmic side of the membrane.

The protein belongs to the SLC12A transporter family.

The protein localises to the membrane. Its function is as follows. Electrically silent transporter system. Mediates sodium and chloride reabsorption. Plays a vital role in the regulation of ionic balance and cell volume. In Manduca sexta (Tobacco hawkmoth), this protein is Bumetanide-sensitive sodium-(potassium)-chloride cotransporter.